The sequence spans 203 residues: Thymidylate kinase (203 aa).

7 to 14 (GPDGSGKS) serves as a coordination point for ATP.

The protein belongs to the thymidylate kinase family.

It catalyses the reaction dTMP + ATP = dTDP + ADP. Its function is as follows. Phosphorylation of dTMP to form dTDP in both de novo and salvage pathways of dTTP synthesis. The protein is Thymidylate kinase of Finegoldia magna (strain ATCC 29328 / DSM 20472 / WAL 2508) (Peptostreptococcus magnus).